A 318-amino-acid chain; its full sequence is Pantothenate kinase (318 aa).

96 to 103 (GSVAVGKS) contacts ATP.

It belongs to the prokaryotic pantothenate kinase family.

The protein resides in the cytoplasm. The enzyme catalyses (R)-pantothenate + ATP = (R)-4'-phosphopantothenate + ADP + H(+). The protein operates within cofactor biosynthesis; coenzyme A biosynthesis; CoA from (R)-pantothenate: step 1/5. In Nitrobacter hamburgensis (strain DSM 10229 / NCIMB 13809 / X14), this protein is Pantothenate kinase.